Consider the following 253-residue polypeptide: Short-chain dehydrogenase/reductase ATR9 (253 aa).

Positions 15, 16, 18, 38, 39, 42, 65, and 129 each coordinate NADP(+). The Proton donor role is filled by S147. Position 194 (T194) interacts with NADP(+).

Belongs to the short-chain dehydrogenases/reductases (SDR) family.

It participates in mycotoxin biosynthesis. Functionally, short-chain dehydrogenase/reductase; part of the core atranone cluster (CAC) which products are predicted to catalyze most or all steps of mycotoxin atranone synthesis, starting from geranylgeranyl pyrophosphate (GGPP). The initial cyclization of GGPP to dolabellane is probably performed by the terpene cyclase ATR13. The Baeyer-Villiger oxidation near the end of the atranone synthesis, which converts atranones D and E to atranones F and G is predicted to be catalyzed by the monooxygenase ATR8. Of the CAC's other predicted gene products, the reducing PKS ATR6 might synthesize a polyketide chain. This polyketide is probably transferred onto the atranone backbone by the polyketide transferase ATR5. Other predicted CAC products include 4 oxygenases (ATR2, ATR3, ATR4, and ATR14), 3 short-chain reductases (ATR7, ATR9, and ATR10), and a methyltransferase (ATR12). These may all be involved in the various steps of atranone biosynthesis, although their specific roles must await experimental determination. The polypeptide is Short-chain dehydrogenase/reductase ATR9 (Stachybotrys chlorohalonatus (strain IBT 40285)).